We begin with the raw amino-acid sequence, 622 residues long: Probable potassium transport system protein Kup (622 aa).

Helical transmembrane passes span 8–28, 50–70, 101–121, 137–157, 165–185, 213–233, 247–267, 285–305, 337–357, 366–386, 393–413, and 419–439; these read LAVL…TSVL, ILSI…VSLV, VLLL…VITP, PTFT…LFAM, IGKF…LLGV, ITFI…ALYA, WFSV…ALLL, ALIP…QALI, IYMP…VVMF, AYGI…FYVI, PLAL…AFFA, and LFAG…LMIT.

Belongs to the HAK/KUP transporter (TC 2.A.72) family.

It localises to the cell inner membrane. It carries out the reaction K(+)(in) + H(+)(in) = K(+)(out) + H(+)(out). Its function is as follows. Transport of potassium into the cell. Likely operates as a K(+):H(+) symporter. This Polaromonas naphthalenivorans (strain CJ2) protein is Probable potassium transport system protein Kup.